A 63-amino-acid polypeptide reads, in one-letter code: Large ribosomal subunit protein uL29 (63 aa).

This sequence belongs to the universal ribosomal protein uL29 family.

The chain is Large ribosomal subunit protein uL29 from Alteromonas mediterranea (strain DSM 17117 / CIP 110805 / LMG 28347 / Deep ecotype).